The sequence spans 547 residues: Chaperonin GroEL (547 aa).

ATP-binding positions include 29–32 (TLGP), 86–90 (DGTTT), G413, 479–481 (NAA), and D495.

This sequence belongs to the chaperonin (HSP60) family. In terms of assembly, forms a cylinder of 14 subunits composed of two heptameric rings stacked back-to-back. Interacts with the co-chaperonin GroES.

It is found in the cytoplasm. It catalyses the reaction ATP + H2O + a folded polypeptide = ADP + phosphate + an unfolded polypeptide.. Its function is as follows. Together with its co-chaperonin GroES, plays an essential role in assisting protein folding. The GroEL-GroES system forms a nano-cage that allows encapsulation of the non-native substrate proteins and provides a physical environment optimized to promote and accelerate protein folding. This chain is Chaperonin GroEL, found in Synechococcus sp. (strain RCC307).